Reading from the N-terminus, the 206-residue chain is Cytochrome c oxidase assembly protein CtaG (206 aa).

Over 1-22 (MTEQPTNRNDVPRRGLGRDATV) the chain is Cytoplasmic. Residues 23 to 43 (ASICGLVVALMVGASYAAVPF) traverse the membrane as a helical; Signal-anchor for type II membrane protein segment. Over 44–206 (YNWFCRATGF…GEPDSRKGAL (163 aa)) the chain is Periplasmic.

It belongs to the COX11/CtaG family.

The protein localises to the cell inner membrane. In terms of biological role, exerts its effect at some terminal stage of cytochrome c oxidase synthesis, probably by being involved in the insertion of the copper B into subunit I. This is Cytochrome c oxidase assembly protein CtaG from Rhodopseudomonas palustris (strain BisB18).